The chain runs to 448 residues: Cysteine--tRNA ligase (448 aa).

Cys27 serves as a coordination point for Zn(2+). Positions 29 to 39 (PTVYNYIHVGN) match the 'HIGH' region motif. 3 residues coordinate Zn(2+): Cys210, His235, and Glu239. Positions 267-271 (KMSKS) match the 'KMSKS' region motif. Lys270 contacts ATP.

The protein belongs to the class-I aminoacyl-tRNA synthetase family. As to quaternary structure, monomer. Zn(2+) is required as a cofactor.

The protein resides in the cytoplasm. The catalysed reaction is tRNA(Cys) + L-cysteine + ATP = L-cysteinyl-tRNA(Cys) + AMP + diphosphate. The sequence is that of Cysteine--tRNA ligase from Lactococcus lactis subsp. cremoris (strain SK11).